The sequence spans 513 residues: uncharacterized protein (513 aa).

Over residues 1–16 (MPREHDSKYHRERDMR) the composition is skewed to basic and acidic residues. The segment at 1–21 (MPREHDSKYHRERDMRSGLQE) is disordered.

This is an uncharacterized protein from Sinorhizobium fredii (strain NBRC 101917 / NGR234).